Consider the following 449-residue polypeptide: Glucose-6-phosphate isomerase (449 aa).

Glu291 (proton donor) is an active-site residue. Active-site residues include His312 and Lys426.

It belongs to the GPI family.

It localises to the cytoplasm. The catalysed reaction is alpha-D-glucose 6-phosphate = beta-D-fructose 6-phosphate. Its pathway is carbohydrate biosynthesis; gluconeogenesis. The protein operates within carbohydrate degradation; glycolysis; D-glyceraldehyde 3-phosphate and glycerone phosphate from D-glucose: step 2/4. In terms of biological role, catalyzes the reversible isomerization of glucose-6-phosphate to fructose-6-phosphate. This is Glucose-6-phosphate isomerase from Streptococcus pyogenes serotype M5 (strain Manfredo).